The primary structure comprises 421 residues: ATP-dependent RNA helicase RhlB (421 aa).

A Q motif motif is present at residues 9-37 (QKFSDFALHPKVVEVLEKKGFHNCTPIQA). A Helicase ATP-binding domain is found at 40–219 (LPLTLAGRDV…FEQMNNAEYI (180 aa)). 53–60 (AQTGTGKT) serves as a coordination point for ATP. The short motif at 165–168 (DEAD) is the DEAD box element. The region spanning 245 to 390 (RLLQTLIEEE…VSKYNPDALM (146 aa)) is the Helicase C-terminal domain. A disordered region spans residues 392-421 (DLPKPLRLTRPRTGNGPRRTGAPRNRRRSG). Low complexity predominate over residues 402 to 414 (PRTGNGPRRTGAP).

This sequence belongs to the DEAD box helicase family. RhlB subfamily. As to quaternary structure, component of the RNA degradosome, which is a multiprotein complex involved in RNA processing and mRNA degradation.

It is found in the cytoplasm. The enzyme catalyses ATP + H2O = ADP + phosphate + H(+). Functionally, DEAD-box RNA helicase involved in RNA degradation. Has RNA-dependent ATPase activity and unwinds double-stranded RNA. The protein is ATP-dependent RNA helicase RhlB of Shigella boydii serotype 18 (strain CDC 3083-94 / BS512).